A 186-amino-acid chain; its full sequence is Acireductone dioxygenase (186 aa).

Fe(2+) contacts are provided by H103, H105, E109, and H147. Ni(2+)-binding residues include H103, H105, E109, and H147.

This sequence belongs to the acireductone dioxygenase (ARD) family. In terms of assembly, monomer. Fe(2+) serves as cofactor. It depends on Ni(2+) as a cofactor.

The enzyme catalyses 1,2-dihydroxy-5-(methylsulfanyl)pent-1-en-3-one + O2 = 3-(methylsulfanyl)propanoate + CO + formate + 2 H(+). It catalyses the reaction 1,2-dihydroxy-5-(methylsulfanyl)pent-1-en-3-one + O2 = 4-methylsulfanyl-2-oxobutanoate + formate + 2 H(+). Its pathway is amino-acid biosynthesis; L-methionine biosynthesis via salvage pathway; L-methionine from S-methyl-5-thio-alpha-D-ribose 1-phosphate: step 5/6. Catalyzes 2 different reactions between oxygen and the acireductone 1,2-dihydroxy-3-keto-5-methylthiopentene (DHK-MTPene) depending upon the metal bound in the active site. Fe-containing acireductone dioxygenase (Fe-ARD) produces formate and 2-keto-4-methylthiobutyrate (KMTB), the alpha-ketoacid precursor of methionine in the methionine recycle pathway. Ni-containing acireductone dioxygenase (Ni-ARD) produces methylthiopropionate, carbon monoxide and formate, and does not lie on the methionine recycle pathway. This chain is Acireductone dioxygenase, found in Synechococcus sp. (strain CC9605).